Reading from the N-terminus, the 349-residue chain is Hydroxymethylglutaryl-CoA synthase (349 aa).

2 residues coordinate (3S)-3-hydroxy-3-methylglutaryl-CoA: D30 and A31. The active-site Proton donor/acceptor is the E82. C114 and T155 together coordinate (3S)-3-hydroxy-3-methylglutaryl-CoA. C114 (acyl-thioester intermediate) is an active-site residue. A CoA-binding site is contributed by R203. (3S)-3-hydroxy-3-methylglutaryl-CoA-binding residues include T205 and H238. Residue H238 is the Proton donor/acceptor of the active site. Residue K243 coordinates CoA. Positions 270 and 300 each coordinate (3S)-3-hydroxy-3-methylglutaryl-CoA.

Belongs to the thiolase-like superfamily. Archaeal HMG-CoA synthase family. As to quaternary structure, interacts with acetoacetyl-CoA thiolase that catalyzes the precedent step in the pathway and with a DUF35 protein. The acetoacetyl-CoA thiolase/HMG-CoA synthase complex channels the intermediate via a fused CoA-binding site, which allows for efficient coupling of the endergonic thiolase reaction with the exergonic HMGCS reaction.

It carries out the reaction acetoacetyl-CoA + acetyl-CoA + H2O = (3S)-3-hydroxy-3-methylglutaryl-CoA + CoA + H(+). It participates in metabolic intermediate biosynthesis; (R)-mevalonate biosynthesis; (R)-mevalonate from acetyl-CoA: step 2/3. In terms of biological role, catalyzes the condensation of acetyl-CoA with acetoacetyl-CoA to form 3-hydroxy-3-methylglutaryl-CoA (HMG-CoA). Functions in the mevalonate (MVA) pathway leading to isopentenyl diphosphate (IPP), a key precursor for the biosynthesis of isoprenoid compounds that are building blocks of archaeal membrane lipids. The sequence is that of Hydroxymethylglutaryl-CoA synthase from Methanococcus vannielii (strain ATCC 35089 / DSM 1224 / JCM 13029 / OCM 148 / SB).